The sequence spans 681 residues: Secretion system apparatus protein SsaV (681 aa).

A run of 7 helical transmembrane segments spans residues 24 to 44 (MVLA…LPTW), 48 to 68 (ILIT…IYLS), 73 to 93 (LSVF…LTIS), 118 to 138 (GNLT…FIVI), 206 to 226 (TIAG…IAIV), 244 to 264 (IGDG…AGII), and 295 to 315 (AVVL…LAFF).

This sequence belongs to the FHIPEP (flagella/HR/invasion proteins export pore) family.

The protein resides in the cell inner membrane. Functionally, component of Salmonella pathogenicity island 2 (SPI-2) type III secretion system, required for secretion of some type III-secreted effectors including the SpvB exotoxin. This chain is Secretion system apparatus protein SsaV (ssaV), found in Salmonella typhimurium (strain 14028s / SGSC 2262).